We begin with the raw amino-acid sequence, 286 residues long: Protein WVD2-like 1 (286 aa).

Positions 31 to 101 (ETDEEFEVKE…ENKKHIDDED (71 aa)) are disordered. Position 32 is a phosphothreonine (T32). A compositionally biased stretch (basic and acidic residues) spans 38–47 (VKECTEEKSL). Positions 131 to 182 (AQRAEKRKEYYQKLEEKNQALEAERNELEQRQKDEQEAALKQLRKNLKFKAK) form a coiled coil. A disordered region spans residues 186–286 (NFYYEAPPAK…KPVNESSEEA (101 aa)). Residues 234–247 (TVSNRNRHSTGTVQ) are compositionally biased toward polar residues.

Belongs to the TPX2 family.

Its subcellular location is the cytoplasm. The protein resides in the cytoskeleton. Functionally, microtubule-associated protein (MAP) that regulates the orientation of interphase cortical microtubules. Modulates both rotational polarity and anisotropic cell expansion during organ growth. Promotes clockwise root and etiolated hypocotyls coiling, clockwise leaf curling, but left-handed petiole twisting. The polypeptide is Protein WVD2-like 1 (WDL1) (Arabidopsis thaliana (Mouse-ear cress)).